The following is a 595-amino-acid chain: Epsin-2 (595 aa).

A 1,2-diacyl-sn-glycero-3-phospho-(1D-myo-inositol-4,5-bisphosphate) contacts are provided by Arg-8, Lys-11, Arg-25, Asn-30, Arg-63, and His-73. Positions 12–144 (NIVNNYSEAE…KDEERLKVER (133 aa)) constitute an ENTH domain. Polar residues predominate over residues 164-183 (NQITFGRGSSQPNLSTSYSE). 4 disordered regions span residues 164-254 (NQIT…RLRR), 267-289 (SRRDTVKVPKKKEAKACCKPGSH), 305-396 (SGPV…KPSS), and 423-469 (TSKK…PESF). The residue at position 170 (Arg-170) is an Omega-N-methylarginine. Ser-173, Ser-192, and Ser-195 each carry phosphoserine. 2 stretches are compositionally biased toward polar residues: residues 197–216 (HGSTSPRVSSELEQARPQTS) and 235–245 (EQSSESVQTAR). 2 UIM domains span residues 218–237 (EEELQLQLALAMSREVAEQS) and 255–274 (GDDLRLQMALEESRRDTVKV). The segment covering 306-337 (GPVTQKTEPWSAGASANQTNPWGGTVAPSNIT) has biased composition (polar residues). Repeat copies occupy residues 313-315 (EPW), 325-327 (NPW), 338-340 (DPW), and 352-354 (DPW). The tract at residues 313 to 389 (EPWSAGASAN…SNAGKTTDAW (77 aa)) is 6 X 3 AA repeats of [DE]-P-W. Polar residues predominate over residues 358 to 367 (TTASTQSVPK). Residues 370-372 (DPW) form repeat 5. A compositionally biased stretch (polar residues) spans 374-384 (ASQQPASNAGK). Copy 6 of the repeat occupies 387–389 (DAW). Position 443 is a phosphoserine (Ser-443). The span at 449–460 (SQSLTSASSKPS) shows a compositional bias: low complexity. Thr-465 carries the phosphothreonine modification. A run of 2 repeats spans residues 494–496 (NPF) and 508–510 (NPF). The interval 494–593 (NPFLAPGAAA…AQSTGTTNPF (100 aa)) is 3 X 3 AA repeats of N-P-F. Position 526 is a phosphoserine (Ser-526). Repeat unit 3 spans residues 591-593 (NPF).

It belongs to the epsin family. In terms of assembly, binds EPS15, AP-2 and clathrin. Interacts with UBQLN2. Interacts with ITSN1. Post-translationally, ubiquitinated.

The protein localises to the cytoplasm. Functionally, plays a role in the formation of clathrin-coated invaginations and endocytosis. This is Epsin-2 (Epn2) from Mus musculus (Mouse).